Consider the following 284-residue polypeptide: Putative transcription factor kapC (284 aa).

Pro residues predominate over residues 1–10 (MQPTLAPAPH). A disordered region spans residues 1-121 (MQPTLAPAPH…NRAAQRAFRQ (121 aa)). A compositionally biased stretch (low complexity) spans 26-40 (HDQLLAAHQHLSHPQ). Positions 41-54 (QPRPQPPAAQPPHM) are enriched in pro residues. Over residues 57–67 (NTTSPRDQNNI) the composition is skewed to polar residues. One can recognise a bZIP domain in the interval 102 to 165 (PLSTSKRAAQ…EYIINLQSRL (64 aa)). The interval 103–126 (LSTSKRAAQNRAAQRAFRQRKESY) is basic motif. The segment covering 108–118 (RAAQNRAAQRA) has biased composition (low complexity). The segment at 130–161 (LEEQVKEFDTMSEAFKALQAENYQLREYIINL) is leucine-zipper. The segment at 174–284 (ELPGNIDLSQ…QAPHGLPMVS (111 aa)) is disordered. Positions 193–222 (PGAGPATTSSSAPAPPSGAQQAQPPQGAAS) are enriched in low complexity.

Belongs to the bZIP family.

It is found in the nucleus. Its function is as follows. Putative transcription factor. In Aspergillus oryzae (strain ATCC 42149 / RIB 40) (Yellow koji mold), this protein is Putative transcription factor kapC (kapC).